Consider the following 402-residue polypeptide: Imidazolonepropionase (402 aa).

Fe(3+) contacts are provided by H66 and H68. Zn(2+) is bound by residues H66 and H68. Residues R75, Y138, and H171 each contribute to the 4-imidazolone-5-propanoate site. An N-formimidoyl-L-glutamate-binding site is contributed by Y138. Residue H236 participates in Fe(3+) binding. H236 lines the Zn(2+) pocket. Q239 provides a ligand contact to 4-imidazolone-5-propanoate. D311 is a Fe(3+) binding site. Zn(2+) is bound at residue D311. N-formimidoyl-L-glutamate-binding residues include N313 and G315. Residue T316 participates in 4-imidazolone-5-propanoate binding.

The protein belongs to the metallo-dependent hydrolases superfamily. HutI family. Zn(2+) is required as a cofactor. Fe(3+) serves as cofactor.

Its subcellular location is the cytoplasm. The enzyme catalyses 4-imidazolone-5-propanoate + H2O = N-formimidoyl-L-glutamate. The protein operates within amino-acid degradation; L-histidine degradation into L-glutamate; N-formimidoyl-L-glutamate from L-histidine: step 3/3. Functionally, catalyzes the hydrolytic cleavage of the carbon-nitrogen bond in imidazolone-5-propanoate to yield N-formimidoyl-L-glutamate. It is the third step in the universal histidine degradation pathway. The chain is Imidazolonepropionase from Pseudomonas aeruginosa (strain LESB58).